We begin with the raw amino-acid sequence, 303 residues long: Taste receptor type 2 member 13 (303 aa).

The Extracellular segment spans residues 1-7 (MKSALPS). The helical transmembrane segment at 8 to 28 (IFTLVIIAEFIIGNLSNGFIV) threads the bilayer. Residues 29–55 (LINCIDWVSKRELSSVDKLLIILAISR) lie on the Cytoplasmic side of the membrane. Residues 56–76 (IGLIWEILVSWFLALHYLAIF) form a helical membrane-spanning segment. Topologically, residues 77-85 (VSGTGLRIM) are extracellular. Residues 86–106 (IFSWIVSNHFNLWLATILSIF) traverse the membrane as a helical segment. Residues 107–128 (YLLKIASFSSPAFLYLKWRVNK) are Cytoplasmic-facing. A helical membrane pass occupies residues 129-149 (VILLILLGTLVFLFLNLIQIN). Over 150–184 (MHIKDWLDRYERNTTWNFSMSDFETFSVSVKFTMT) the chain is Extracellular. N-linked (GlcNAc...) asparagine glycans are attached at residues N162 and N166. The helical transmembrane segment at 185–205 (MFSLTPFTVAFISFLLLIFSL) threads the bilayer. The Cytoplasmic portion of the chain corresponds to 206 to 232 (QKHLQKMQLNYKGHRDPKTKVHTNALK). The helical transmembrane segment at 233 to 253 (IVISFLLFYASFFLCVLXSWI) threads the bilayer. Over 254 to 261 (SELYQNTV) the chain is Extracellular. Residues 262–282 (IYMLCETIGVFYPSSHSFLLI) traverse the membrane as a helical segment. Residues 283–303 (LGNAKLRQAFLLVAAKVWAKR) lie on the Cytoplasmic side of the membrane.

The protein belongs to the G-protein coupled receptor T2R family.

It is found in the membrane. In terms of biological role, receptor that may play a role in the perception of bitterness and is gustducin-linked. May play a role in sensing the chemical composition of the gastrointestinal content. The activity of this receptor may stimulate alpha gustducin, mediate PLC-beta-2 activation and lead to the gating of TRPM5. The sequence is that of Taste receptor type 2 member 13 (TAS2R13) from Gorilla gorilla gorilla (Western lowland gorilla).